The sequence spans 269 residues: Hydroxyethylthiazole kinase (269 aa).

M42 contacts substrate. ATP-binding residues include R118 and S164. Residue G191 participates in substrate binding.

This sequence belongs to the Thz kinase family. The cofactor is Mg(2+).

The enzyme catalyses 5-(2-hydroxyethyl)-4-methylthiazole + ATP = 4-methyl-5-(2-phosphooxyethyl)-thiazole + ADP + H(+). It participates in cofactor biosynthesis; thiamine diphosphate biosynthesis; 4-methyl-5-(2-phosphoethyl)-thiazole from 5-(2-hydroxyethyl)-4-methylthiazole: step 1/1. Catalyzes the phosphorylation of the hydroxyl group of 4-methyl-5-beta-hydroxyethylthiazole (THZ). The chain is Hydroxyethylthiazole kinase from Listeria monocytogenes serotype 4a (strain HCC23).